The chain runs to 402 residues: MQTLHQSQLLQNPAEAANNQSESDAPPKQVAQAMERLNQAARVIADIRLGADRILEAMFVASQPRHTDMPLQLFLREDASMRQHLQDLRLIGKKLEESGVLTESLRSRSNSWGLHMPLVCPDGAVVAYAWKRQLAGQAGASAVDRTRLALKAFTDQKRRFFPHIDDGLKMEPSSKKHRASHLLLENGREEPVDYKTLPDIQSRLEKLVPSVKVSTYGRLNWLKRANSLPGSGSDDPTEASKPIFQSSSKLRSGLQTEVVDKIAVIELSFPSLFRAIVSLSPAGSVDPDAVAFFSPDEGGSYLHARGFSVYHVYKHITEHAATALQYFLGFGTGTALYSLLLWICSFESVFSKPCTKCGRLLAMDKKSALILPPLHRAYQELPLALNLDVCEAYHSSCSQDDT.

The span at 1-23 (MQTLHQSQLLQNPAEAANNQSES) shows a compositional bias: polar residues. The tract at residues 1–30 (MQTLHQSQLLQNPAEAANNQSESDAPPKQV) is disordered. A coiled-coil region spans residues 28–49 (KQVAQAMERLNQAARVIADIRL).

The protein belongs to the Mediator complex subunit 27 family. As to quaternary structure, component of the Mediator complex.

The protein localises to the nucleus. Component of the Mediator complex, a coactivator involved in the regulated transcription of nearly all RNA polymerase II-dependent genes. Mediator functions as a bridge to convey information from gene-specific regulatory proteins to the basal RNA polymerase II transcription machinery. The Mediator complex, having a compact conformation in its free form, is recruited to promoters by direct interactions with regulatory proteins and serves for the assembly of a functional preinitiation complex with RNA polymerase II and the general transcription factors. In Arabidopsis thaliana (Mouse-ear cress), this protein is Mediator of RNA polymerase II transcription subunit 27 (MED27).